Reading from the N-terminus, the 267-residue chain is 4-hydroxy-tetrahydrodipicolinate reductase (267 aa).

Residue 10–15 (GCLGKQ) participates in NAD(+) binding. Residue arginine 37 participates in NADP(+) binding. NAD(+) is bound by residues 99 to 101 (GTT) and 122 to 125 (TTNV). Residue histidine 154 is the Proton donor/acceptor of the active site. Histidine 155 serves as a coordination point for (S)-2,3,4,5-tetrahydrodipicolinate. Residue lysine 158 is the Proton donor of the active site. Residue 164 to 165 (GT) coordinates (S)-2,3,4,5-tetrahydrodipicolinate.

It belongs to the DapB family.

Its subcellular location is the cytoplasm. It catalyses the reaction (S)-2,3,4,5-tetrahydrodipicolinate + NAD(+) + H2O = (2S,4S)-4-hydroxy-2,3,4,5-tetrahydrodipicolinate + NADH + H(+). The catalysed reaction is (S)-2,3,4,5-tetrahydrodipicolinate + NADP(+) + H2O = (2S,4S)-4-hydroxy-2,3,4,5-tetrahydrodipicolinate + NADPH + H(+). It participates in amino-acid biosynthesis; L-lysine biosynthesis via DAP pathway; (S)-tetrahydrodipicolinate from L-aspartate: step 4/4. Its function is as follows. Catalyzes the conversion of 4-hydroxy-tetrahydrodipicolinate (HTPA) to tetrahydrodipicolinate. This is 4-hydroxy-tetrahydrodipicolinate reductase from Ehrlichia chaffeensis (strain ATCC CRL-10679 / Arkansas).